A 394-amino-acid polypeptide reads, in one-letter code: Ribulose bisphosphate carboxylase large chain (394 aa).

Lys5 carries the post-translational modification N6,N6,N6-trimethyllysine. Substrate contacts are provided by Asn114 and Thr164. Catalysis depends on Lys166, which acts as the Proton acceptor. Lys168 serves as a coordination point for substrate. Residues Lys192, Asp194, and Glu195 each contribute to the Mg(2+) site. Lys192 carries the post-translational modification N6-carboxylysine. The active-site Proton acceptor is the His285. Residues Arg286, His318, and Ser370 each contribute to the substrate site.

This sequence belongs to the RuBisCO large chain family. Type I subfamily. In terms of assembly, heterohexadecamer of 8 large chains and 8 small chains. The cofactor is Mg(2+).

The protein localises to the plastid. The protein resides in the chloroplast. The catalysed reaction is 2 (2R)-3-phosphoglycerate + 2 H(+) = D-ribulose 1,5-bisphosphate + CO2 + H2O. It carries out the reaction D-ribulose 1,5-bisphosphate + O2 = 2-phosphoglycolate + (2R)-3-phosphoglycerate + 2 H(+). Functionally, ruBisCO catalyzes two reactions: the carboxylation of D-ribulose 1,5-bisphosphate, the primary event in carbon dioxide fixation, as well as the oxidative fragmentation of the pentose substrate in the photorespiration process. Both reactions occur simultaneously and in competition at the same active site. In Victoria cruziana (Santa Cruz water lily), this protein is Ribulose bisphosphate carboxylase large chain (rbcL).